Reading from the N-terminus, the 176-residue chain is Large ribosomal subunit protein eL6 (176 aa).

The tract at residues 1-27 (MSQVAPKWYQSEDVPAPKQTRKTARPQ) is disordered.

It belongs to the eukaryotic ribosomal protein eL6 family. As to quaternary structure, component of the large ribosomal subunit. Mature ribosomes consist of a small (40S) and a large (60S) subunit. The 40S subunit contains about 32 different proteins and 1 molecule of RNA (18S). The 60S subunit contains 45 different proteins and 3 molecules of RNA (25S, 5.8S and 5S).

It is found in the cytoplasm. Its function is as follows. Component of the ribosome, a large ribonucleoprotein complex responsible for the synthesis of proteins in the cell. The small ribosomal subunit (SSU) binds messenger RNAs (mRNAs) and translates the encoded message by selecting cognate aminoacyl-transfer RNA (tRNA) molecules. The large subunit (LSU) contains the ribosomal catalytic site termed the peptidyl transferase center (PTC), which catalyzes the formation of peptide bonds, thereby polymerizing the amino acids delivered by tRNAs into a polypeptide chain. The nascent polypeptides leave the ribosome through a tunnel in the LSU and interact with protein factors that function in enzymatic processing, targeting, and the membrane insertion of nascent chains at the exit of the ribosomal tunnel. The polypeptide is Large ribosomal subunit protein eL6 (Candida albicans (strain SC5314 / ATCC MYA-2876) (Yeast)).